Reading from the N-terminus, the 310-residue chain is Homocysteine S-methyltransferase (310 aa).

Residues 1–310 (MSQNNPLRAL…ADIAALKARS (310 aa)) enclose the Hcy-binding domain. Residues C229, C295, and C296 each coordinate Zn(2+).

In terms of assembly, monomer. Zn(2+) serves as cofactor.

The enzyme catalyses S-methyl-L-methionine + L-homocysteine = 2 L-methionine + H(+). Its function is as follows. Catalyzes methyl transfer from S-methylmethionine or S-adenosylmethionine (less efficient) to homocysteine, selenohomocysteine and less efficiently selenocysteine. The sequence is that of Homocysteine S-methyltransferase (mmuM) from Escherichia coli (strain K12).